The chain runs to 392 residues: Selenide, water dikinase 1 (392 aa).

Residue C31 is part of the active site. Residues K32, 67 to 69 (GMD), D87, D110, and 161 to 164 (GGQT) contribute to the ATP site. Mg(2+) is bound at residue D69. Residue D110 coordinates Mg(2+). D265 lines the Mg(2+) pocket. T387 is modified (phosphothreonine).

It belongs to the selenophosphate synthase 1 family. Class II subfamily. In terms of assembly, homodimer. It depends on Mg(2+) as a cofactor.

The protein localises to the cell membrane. Its subcellular location is the nucleus membrane. The enzyme catalyses hydrogenselenide + ATP + H2O = selenophosphate + AMP + phosphate + 2 H(+). Its function is as follows. Synthesizes selenophosphate from selenide and ATP. The sequence is that of Selenide, water dikinase 1 (sephs1) from Danio rerio (Zebrafish).